The chain runs to 338 residues: Phenylalanine--tRNA ligase alpha subunit (338 aa).

E253 contacts Mg(2+).

Belongs to the class-II aminoacyl-tRNA synthetase family. Phe-tRNA synthetase alpha subunit type 1 subfamily. In terms of assembly, tetramer of two alpha and two beta subunits. The cofactor is Mg(2+).

The protein resides in the cytoplasm. The enzyme catalyses tRNA(Phe) + L-phenylalanine + ATP = L-phenylalanyl-tRNA(Phe) + AMP + diphosphate + H(+). In Trichlorobacter lovleyi (strain ATCC BAA-1151 / DSM 17278 / SZ) (Geobacter lovleyi), this protein is Phenylalanine--tRNA ligase alpha subunit.